We begin with the raw amino-acid sequence, 437 residues long: Cobyrinate a,c-diamide synthase (437 aa).

The GATase cobBQ-type domain maps to 243–433 (IAAIAYDSAF…SHFHFSSARG (191 aa)). The active-site Nucleophile is the C324.

Belongs to the CobB/CbiA family. The cofactor is Mg(2+).

It catalyses the reaction cob(II)yrinate + 2 L-glutamine + 2 ATP + 2 H2O = cob(II)yrinate a,c diamide + 2 L-glutamate + 2 ADP + 2 phosphate + 2 H(+). It participates in cofactor biosynthesis; adenosylcobalamin biosynthesis; cob(II)yrinate a,c-diamide from sirohydrochlorin (anaerobic route): step 10/10. Functionally, catalyzes the ATP-dependent amidation of the two carboxylate groups at positions a and c of cobyrinate, using either L-glutamine or ammonia as the nitrogen source. The protein is Cobyrinate a,c-diamide synthase of Sulfurisphaera tokodaii (strain DSM 16993 / JCM 10545 / NBRC 100140 / 7) (Sulfolobus tokodaii).